A 319-amino-acid chain; its full sequence is MAMIFCNTLYSSSSPSYLSPLTSKPSRFSKNLRPRAQFQSMEDHDDHLRRKFMEFPYVSPTRKQLMVDLMSTVENRLQSQLLPCNLPPDVRNFNNPNGSAEASLHIRSGDKSSPIDFVIGSWIHCKIPTGVSLNITSISGFLNSSTKAPNFVVELIQSSSKSLVLILDLPHRKDLVLNPDYLKEYYQDTALDSHRQSLLKLPEVNPYVSPSLFVRSAFSPTASMLKIDAEEEDKLEEILRDHVSPAAKEVLEVWLERCVKEEEEKIVVGEEERMELERRDKSFRRKSIEDDLDLQFPRMFGEEVSSRVVHAIKEAFGVL.

The N-terminal 39 residues, 1–39, are a transit peptide targeting the chloroplast; sequence MAMIFCNTLYSSSSPSYLSPLTSKPSRFSKNLRPRAQFQ. Residues Glu154 and 207–209 contribute to the red chlorophyll catabolite site; that span reads YVS. Residues 255 to 286 adopt a coiled-coil conformation; that stretch reads LERCVKEEEEKIVVGEEERMELERRDKSFRRK. A red chlorophyll catabolite-binding site is contributed by Asp291.

In terms of assembly, homodimer. Interacts with HCAR. Interacts with SGR1, NYC1, NOL, PPH, PAO and the LHCII complex. Part of a SGR1-CCE-LHCII complex, which acts in chlorophyll breakdown. Expressed in all tissues tested, including roots.

The protein localises to the plastid. It localises to the chloroplast stroma. It is found in the chloroplast thylakoid membrane. It carries out the reaction primary fluorescent chlorophyll catabolite + 2 oxidized [2Fe-2S]-[ferredoxin] = red chlorophyll catabolite + 2 reduced [2Fe-2S]-[ferredoxin] + 3 H(+). It functions in the pathway porphyrin-containing compound metabolism; chlorophyll degradation. Its function is as follows. Catalyzes the key reaction of chlorophyll catabolism, porphyrin macrocycle cleavage of pheophorbide a (pheide a) to a primary fluorescent catabolite (pFCC). Works in a two-step reaction with pheophorbide a oxygenase (PaO) by reducing the C20/C1 double bond of the intermediate, RCC. Belongs to the chlorophyll catabolic enzymes (CCEs). This chain is Red chlorophyll catabolite reductase, chloroplastic, found in Arabidopsis thaliana (Mouse-ear cress).